A 268-amino-acid chain; its full sequence is Nickel import ATP-binding protein NikE (268 aa).

In terms of domain architecture, ABC transporter spans 4–252 (LNVCGLSHHY…SSDAGRVLQN (249 aa)). 45-52 (GRSGCGKS) contributes to the ATP binding site.

Belongs to the ABC transporter superfamily. Nickel importer (TC 3.A.1.5.3) family. In terms of assembly, the complex is composed of two ATP-binding proteins (NikD and NikE), two transmembrane proteins (NikB and NikC) and a solute-binding protein (NikA).

It localises to the cell inner membrane. It carries out the reaction Ni(2+)(out) + ATP + H2O = Ni(2+)(in) + ADP + phosphate + H(+). Functionally, part of the ABC transporter complex NikABCDE involved in nickel import. Responsible for energy coupling to the transport system. The sequence is that of Nickel import ATP-binding protein NikE from Shigella flexneri.